Reading from the N-terminus, the 352-residue chain is Phosphate acyltransferase (352 aa).

Belongs to the PlsX family. Homodimer. Probably interacts with PlsY.

The protein resides in the cytoplasm. The enzyme catalyses a fatty acyl-[ACP] + phosphate = an acyl phosphate + holo-[ACP]. The protein operates within lipid metabolism; phospholipid metabolism. Its function is as follows. Catalyzes the reversible formation of acyl-phosphate (acyl-PO(4)) from acyl-[acyl-carrier-protein] (acyl-ACP). This enzyme utilizes acyl-ACP as fatty acyl donor, but not acyl-CoA. The protein is Phosphate acyltransferase of Brucella anthropi (strain ATCC 49188 / DSM 6882 / CCUG 24695 / JCM 21032 / LMG 3331 / NBRC 15819 / NCTC 12168 / Alc 37) (Ochrobactrum anthropi).